Consider the following 460-residue polypeptide: Serine/threonine-protein kinase cds1 (460 aa).

Positions 60-116 constitute an FHA domain; it reads WRFGRHKSCEVVLNGPRVSNFHFEIYQGHRNDSDESENVVFLHDHSSNGTFLNFERL. The 267-residue stretch at 167–433 folds into the Protein kinase domain; the sequence is YEIIRTLGSG…ESEALQHPWF (267 aa). ATP-binding positions include 173-181 and K196; that span reads LGSGTFAVV. D294 acts as the Proton acceptor in catalysis. The span at 438–453 shows a compositional bias: basic and acidic residues; it reads THEHRTPPSSSEHEAT. A disordered region spans residues 438–460; that stretch reads THEHRTPPSSSEHEATEQLNSSS. A Phosphothreonine modification is found at T443.

Belongs to the protein kinase superfamily. CAMK Ser/Thr protein kinase family. CHEK2 subfamily. Interacts with rad26. Post-translationally, autophosphorylated.

The catalysed reaction is L-seryl-[protein] + ATP = O-phospho-L-seryl-[protein] + ADP + H(+). It carries out the reaction L-threonyl-[protein] + ATP = O-phospho-L-threonyl-[protein] + ADP + H(+). Its function is as follows. Has a role in the DNA replication-monitoring S/G2 checkpoint system. It is responsible for blocking mitosis in the S phase. It monitors DNA synthesis by interacting with DNA polymerase alpha and sends a signal to block the onset of mitosis while DNA synthesis is in progress. Phosphorylates rad60 and dna2. The sequence is that of Serine/threonine-protein kinase cds1 (cds1) from Schizosaccharomyces pombe (strain 972 / ATCC 24843) (Fission yeast).